We begin with the raw amino-acid sequence, 805 residues long: Leucine--tRNA ligase (805 aa).

Residues 41 to 52 (PYPSGAGLHVGH) carry the 'HIGH' region motif. The 'KMSKS' region signature appears at 577 to 581 (KMSKS). Lys-580 lines the ATP pocket.

The protein belongs to the class-I aminoacyl-tRNA synthetase family.

The protein localises to the cytoplasm. The enzyme catalyses tRNA(Leu) + L-leucine + ATP = L-leucyl-tRNA(Leu) + AMP + diphosphate. This is Leucine--tRNA ligase from Staphylococcus aureus (strain USA300).